Reading from the N-terminus, the 424-residue chain is MASQGCVDWQFSGSDAAEKAAQASLGTYSSEIFSLCDPQGKPILPPLSEEAETSHTAEKAVVKAVLCGTGNAYAPSIGLPVAKRAVAEYLNRDLDNKLTGDDVYMTVGCKQAIELAVSILAKPKANILLPRPGFPWDMVHSIYKHLEVRRYEFIPERDFEIDFNSVREMVDENTFAIFIINPHNPNGNYYTEAHLKQLATLARELGIMVVSDEVYRWSVFGSNPFVPMGKFSSIVPVITLGSISKGWIVPGWRTGWLALHDLNGVFRSTKVLKAAKEFLEITSKPPTVIQAAIPTILEKTPQDFFEKRGIFLKDKVDFGYSKLKNIPTLTCYMKPESCTFLWTKLDPLHFVDIEDDHDFCRKLAKEENLVVLPGIAFGQNNWLRHSIDMETPRLEDAFERLKSFCERHSVIVEASSLKDVNGVN.

The protein belongs to the class-I pyridoxal-phosphate-dependent aminotransferase family. Requires pyridoxal 5'-phosphate as cofactor.

The sequence is that of Probable aminotransferase TAT4 from Arabidopsis thaliana (Mouse-ear cress).